We begin with the raw amino-acid sequence, 206 residues long: Urease accessory protein UreG (206 aa).

A GTP-binding site is contributed by 14–21 (GPVGSGKT).

This sequence belongs to the SIMIBI class G3E GTPase family. UreG subfamily. Homodimer. UreD, UreF and UreG form a complex that acts as a GTP-hydrolysis-dependent molecular chaperone, activating the urease apoprotein by helping to assemble the nickel containing metallocenter of UreC. The UreE protein probably delivers the nickel.

It localises to the cytoplasm. In terms of biological role, facilitates the functional incorporation of the urease nickel metallocenter. This process requires GTP hydrolysis, probably effectuated by UreG. This is Urease accessory protein UreG from Methylocella silvestris (strain DSM 15510 / CIP 108128 / LMG 27833 / NCIMB 13906 / BL2).